A 186-amino-acid polypeptide reads, in one-letter code: Large ribosomal subunit protein uL5 (186 aa).

It belongs to the universal ribosomal protein uL5 family. Part of the 50S ribosomal subunit; part of the 5S rRNA/L5/L18/L25 subcomplex. Contacts the 5S rRNA and the P site tRNA. Forms a bridge to the 30S subunit in the 70S ribosome.

Functionally, this is one of the proteins that bind and probably mediate the attachment of the 5S RNA into the large ribosomal subunit, where it forms part of the central protuberance. In the 70S ribosome it contacts protein S13 of the 30S subunit (bridge B1b), connecting the 2 subunits; this bridge is implicated in subunit movement. Contacts the P site tRNA; the 5S rRNA and some of its associated proteins might help stabilize positioning of ribosome-bound tRNAs. This Ruegeria pomeroyi (strain ATCC 700808 / DSM 15171 / DSS-3) (Silicibacter pomeroyi) protein is Large ribosomal subunit protein uL5.